We begin with the raw amino-acid sequence, 292 residues long: 33 kDa chaperonin (292 aa).

Cystine bridges form between Cys-238–Cys-240 and Cys-271–Cys-274.

The protein belongs to the HSP33 family. In terms of processing, under oxidizing conditions two disulfide bonds are formed involving the reactive cysteines. Under reducing conditions zinc is bound to the reactive cysteines and the protein is inactive.

It is found in the cytoplasm. Functionally, redox regulated molecular chaperone. Protects both thermally unfolding and oxidatively damaged proteins from irreversible aggregation. Plays an important role in the bacterial defense system toward oxidative stress. The sequence is that of 33 kDa chaperonin from Latilactobacillus sakei subsp. sakei (strain 23K) (Lactobacillus sakei subsp. sakei).